The chain runs to 794 residues: Kinesin-like protein KIN-13A (794 aa).

Residues 193–526 (KIKVVVRKRP…LRYADRVKSL (334 aa)) form the Kinesin motor domain. 282 to 289 (GQTGSGKT) contributes to the ATP binding site. A disordered region spans residues 525–699 (SLSKSGNSKK…YETASRQYET (175 aa)). The span at 569–579 (ETRRRVVEKDS) shows a compositional bias: basic and acidic residues. Polar residues-rich tracts occupy residues 580-593 (NSSTSGIDFRQPTN) and 611-632 (EPNSSFAGSTSQRNNISSYPQE). Residues 650–668 (GLREEKPDRPQNWSKRDVS) are compositionally biased toward basic and acidic residues. Residues 669–696 (SSDIPTLTNFRQNASETASRQYETASRQ) are compositionally biased toward polar residues. The stretch at 705–742 (ENLDALLEEEEALIAAHRKEIEDTMEIVREEMKLLAEV) forms a coiled coil.

It belongs to the TRAFAC class myosin-kinesin ATPase superfamily. Kinesin family. KIN-13 subfamily. In terms of assembly, component of the active ARAC10-IRC5-KIN13A complex. Interacts (via-C-terminus) with ICR2 and ICR5 (via N-terminus). No interactions with ICR1. As to expression, expressed in leaves, roots, young and mature seedlings. Preferentially expressed in the secondary cell wall pits of differentiating metaxylem vessel cells (at the protein level).

The protein resides in the golgi apparatus. The protein localises to the golgi stack. Its subcellular location is the cytoplasm. It localises to the cytoskeleton. Internal motor kinesin involved in trichome morphogenesis. Participates in regulating the formation of Golgi-associated vesicles. Plays a central role in microtubule disassembly via the active ARAC10-ICR5 cascade, which establishes the secondary cell wall pattern in metaxylem vessel cells. Acts redundantly with KIN13B to modulate cell wall synthesis and cell expansion via the THE1 pathway. This is Kinesin-like protein KIN-13A from Arabidopsis thaliana (Mouse-ear cress).